The chain runs to 384 residues: Secreted effector protein EspF(U) (384 aa).

6 repeat units span residues 96–142, 143–189, 190–236, 237–283, 284–330, and 331–377. The 6 X 48 AA approximate tandem repeats stretch occupies residues 96 to 377; the sequence is IXPARSMAEH…RLMQHLAEHG (282 aa). Residues 247–266 are disordered; it reads IPPAPNWPAPPPPVQNEQSR. Residues 248–260 show a composition bias toward pro residues; sequence PPAPNWPAPPPPV.

This sequence belongs to the EspF(U)/TccP family. Interacts with host BAIAP2 and host WASL/N-WASP. Can also interact with host proteins BAIAP2L1 and WAS/WASP.

It localises to the secreted. Its subcellular location is the host cytoplasm. Functionally, required for efficient pedestal formation in host epithelial cells during infection. Acts as an intermediate between Tir (via host BAIAP2) and host WASL/N-WASP. Directly binds and activates WASL/N-WASP, which stimulates actin polymerization and leads to the formation of actin pedestals at the sites of bacterial adhesion. The chain is Secreted effector protein EspF(U) (espF(U)) from Escherichia coli O157:H7.